Consider the following 2225-residue polypeptide: Multifunctional protein CAD (2225 aa).

A2 is subject to N-acetylalanine. Residues 2–365 (AALVLEDGSV…TVKEATAGNP (364 aa)) are GATase (Glutamine amidotransferase). Residues S44, G222, and G224 each coordinate L-glutamine. One can recognise a Glutamine amidotransferase type-1 domain in the interval 177-363 (RILALDCGLK…LETVKEATAG (187 aa)). C252 functions as the Nucleophile; for GATase activity in the catalytic mechanism. L-glutamine contacts are provided by L253, Q256, N294, G296, and F297. Catalysis depends on for GATase activity residues H336 and E338. The interval 366 to 394 (GGQTVRERLTERLCPPGIPTPGSGLPPPR) is linker. Residues 395 to 933 (KVLILGSGGL…TTHDLTFRTP (539 aa)) are CPSase A. A CPSase (Carbamoyl phosphate synthase) region spans residues 395 to 1455 (KVLILGSGGL…APPLKVHVDC (1061 aa)). T456 is subject to Phosphothreonine; by MAPK1. ATP is bound by residues R515, R555, G561, G562, K592, E599, G625, I626, H627, Q668, and E682. In terms of domain architecture, ATP-grasp 1 spans 519-711 (AARMAEIGEH…LAYVAAKLAL (193 aa)). Mg(2+) is bound by residues Q668, E682, and N684. Mn(2+)-binding residues include Q668, E682, and N684. K747 bears the N6-acetyllysine mark. The tract at residues 934–1455 (HVLVLGSGVY…APPLKVHVDC (522 aa)) is CPSase B. S1038 is subject to Phosphoserine. Positions 1052–1243 (SRLLDTIGIS…LVALATRVIM (192 aa)) constitute an ATP-grasp 2 domain. ATP contacts are provided by R1088, K1127, I1129, E1134, G1159, V1160, H1161, S1162, Q1202, and E1214. Mg(2+) is bound by residues Q1202, E1214, and N1216. The Mn(2+) site is built by Q1202, E1214, and N1216. The region spanning 1308–1462 (FKIPKKNILL…VDCMTSQKLV (155 aa)) is the MGS-like domain. The residue at position 1406 (S1406) is a Phosphoserine; by PKA. N6-acetyllysine is present on K1411. Residues 1456-1788 (MTSQKLVRLP…VKGTVRRVVL (333 aa)) are DHOase (dihydroorotase). Zn(2+) is bound by residues H1471 and H1473. (S)-dihydroorotate contacts are provided by R1475 and N1505. 5 residues coordinate Zn(2+): K1556, H1590, C1613, H1614, and E1637. Residue K1556 is modified to N6-carboxylysine. R1661 serves as a coordination point for (S)-dihydroorotate. Position 1686 (D1686) interacts with Zn(2+). D1686 acts as the For DHOase activity in catalysis. (S)-dihydroorotate is bound by residues H1690 and P1702. Positions 1789–1917 (RGEVAYIDGQ…GLLHPQTSPL (129 aa)) are linker. Positions 1811–1899 (KWPQGAVPQL…YPPPPVPRQA (89 aa)) are disordered. The span at 1825–1834 (PATSEMTTTP) shows a compositional bias: polar residues. S1859 is subject to Phosphoserine; by RPS6KB1 and PKA. The span at 1866–1878 (EEPKEKSSRKVAE) shows a compositional bias: basic and acidic residues. S1873 bears the Phosphoserine; by PKC; in vitro mark. T1884 carries the phosphothreonine modification. S1900 and S1938 each carry phosphoserine. An ATCase (Aspartate transcarbamylase) region spans residues 1918-2225 (LHSLVGQHIL…ALLATVLGRF (308 aa)). Carbamoyl phosphate is bound by residues R1975 and T1976. K2003 is an L-aspartate binding site. Positions 2024, 2052, and 2055 each coordinate carbamoyl phosphate. Residues R2085 and R2146 each contribute to the L-aspartate site. Residues M2185 and P2186 each coordinate carbamoyl phosphate.

It in the N-terminal section; belongs to the CarA family. This sequence in the 2nd section; belongs to the CarB family. The protein in the 3rd section; belongs to the metallo-dependent hydrolases superfamily. DHOase family. CAD subfamily. In the C-terminal section; belongs to the aspartate/ornithine carbamoyltransferase superfamily. ATCase family. In terms of assembly, homohexamer. Interacts with CIPC. Zn(2+) serves as cofactor. It depends on Mg(2+) as a cofactor. Requires Mn(2+) as cofactor. Activated by MAP kinase (Erk1/2) phosphorylation just prior to the S phase of the cell cycle, when the demand for pyrimidine nucleotides is greatest, and down-regulated as the cells emerge from S phase by protein kinase A (PKA) phosphorylation. Phosphorylation at Ser-1859 by RPS6KB1 downstream of MTOR promotes oligomerization and stimulates dihydroorotase activity. Phosphorylation at Ser-1406 reduces sensitivity to feedback inhibition by UTP.

Its subcellular location is the cytoplasm. The protein localises to the nucleus. The enzyme catalyses hydrogencarbonate + L-glutamine + 2 ATP + H2O = carbamoyl phosphate + L-glutamate + 2 ADP + phosphate + 2 H(+). It carries out the reaction L-glutamine + H2O = L-glutamate + NH4(+). It catalyses the reaction hydrogencarbonate + NH4(+) + 2 ATP = carbamoyl phosphate + 2 ADP + phosphate + 2 H(+). The catalysed reaction is carbamoyl phosphate + L-aspartate = N-carbamoyl-L-aspartate + phosphate + H(+). The enzyme catalyses (S)-dihydroorotate + H2O = N-carbamoyl-L-aspartate + H(+). It functions in the pathway pyrimidine metabolism; UMP biosynthesis via de novo pathway; (S)-dihydroorotate from bicarbonate: step 1/3. It participates in pyrimidine metabolism; UMP biosynthesis via de novo pathway; (S)-dihydroorotate from bicarbonate: step 2/3. Its pathway is pyrimidine metabolism; UMP biosynthesis via de novo pathway; (S)-dihydroorotate from bicarbonate: step 3/3. Allosterically regulated and controlled by phosphorylation. 5-phosphoribose 1-diphosphate (PRPP) is an activator while UMP and UTP are inhibitors of the CPSase reaction. Functionally, multifunctional protein that encodes the first 3 enzymatic activities of the de novo pyrimidine pathway: carbamoylphosphate synthetase (CPSase; EC 6.3.5.5), aspartate transcarbamylase (ATCase; EC 2.1.3.2) and dihydroorotase (DHOase; EC 3.5.2.3). The CPSase-function is accomplished in 2 steps, by a glutamine-dependent amidotransferase activity (GATase) that binds and cleaves glutamine to produce ammonia, followed by an ammonium-dependent carbamoyl phosphate synthetase, which reacts with the ammonia, hydrogencarbonate and ATP to form carbamoyl phosphate. The endogenously produced carbamoyl phosphate is sequestered and channeled to the ATCase active site. ATCase then catalyzes the formation of carbamoyl-L-aspartate from L-aspartate and carbamoyl phosphate. In the last step, DHOase catalyzes the cyclization of carbamoyl aspartate to dihydroorotate. The sequence is that of Multifunctional protein CAD from Homo sapiens (Human).